Consider the following 444-residue polypeptide: Acyl-CoA (8-3)-desaturase (444 aa).

At Met1 the chain carries N-acetylmethionine. At Met1–Arg121 the chain is on the cytoplasmic side. Residues Pro17–Ser94 form the Cytochrome b5 heme-binding domain. A helical membrane pass occupies residues Met122–Leu142. Residues Asp143–Ala145 lie on the Lumenal side of the membrane. The helical transmembrane segment at Ala146 to Val170 threads the bilayer. At Gln171–Phe267 the chain is on the cytoplasmic side. Residues His179–His183 carry the Histidine box-1 motif. The Histidine box-2 signature appears at His216–His220. A helical membrane pass occupies residues Leu268–Ile288. Residues Gln289 to Arg305 lie on the Lumenal side of the membrane. The helical transmembrane segment at Phe306–Val326 threads the bilayer. Residues Arg327–Gln444 are Cytoplasmic-facing. The Histidine box-3 motif lies at Gln382–His386.

This sequence belongs to the fatty acid desaturase type 1 family. Widely expressed, with highest levels in liver, brain, adrenal gland and heart. Highly expressed in fetal liver and brain.

Its subcellular location is the endoplasmic reticulum membrane. It is found in the mitochondrion. The catalysed reaction is (8Z,11Z,14Z)-eicosatrienoyl-CoA + 2 Fe(II)-[cytochrome b5] + O2 + 2 H(+) = (5Z,8Z,11Z,14Z)-eicosatetraenoyl-CoA + 2 Fe(III)-[cytochrome b5] + 2 H2O. It catalyses the reaction (8Z,11Z,14Z,17Z)-eicosatetraenoyl-CoA + 2 Fe(II)-[cytochrome b5] + O2 + 2 H(+) = (5Z,8Z,11Z,14Z,17Z)-eicosapentaenoyl-CoA + 2 Fe(III)-[cytochrome b5] + 2 H2O. It carries out the reaction (11E)-octadecenoyl-CoA + 2 Fe(II)-[cytochrome b5] + O2 + 2 H(+) = (5Z,11E)-octadecadienoyl-CoA + 2 Fe(III)-[cytochrome b5] + 2 H2O. It functions in the pathway lipid metabolism; polyunsaturated fatty acid biosynthesis. In terms of biological role, acts as a front-end fatty acyl-coenzyme A (CoA) desaturase that introduces a cis double bond at carbon 5 located between a preexisting double bond and the carboxyl end of the fatty acyl chain. Involved in biosynthesis of highly unsaturated fatty acids (HUFA) from the essential polyunsaturated fatty acids (PUFA) linoleic acid (LA) (18:2n-6) and alpha-linolenic acid (ALA) (18:3n-3) precursors. Specifically, desaturates dihomo-gamma-linoleoate (DGLA) (20:3n-6) and eicosatetraenoate (ETA) (20:4n-3) to generate arachidonate (AA) (20:4n-6) and eicosapentaenoate (EPA) (20:5n-3), respectively. As a rate limiting enzyme for DGLA (20:3n-6) and AA (20:4n-6)-derived eicosanoid biosynthesis, controls the metabolism of inflammatory lipids like prostaglandin E2, critical for efficient acute inflammatory response and maintenance of epithelium homeostasis. Contributes to membrane phospholipid biosynthesis by providing AA (20:4n-6) as a major acyl chain esterified into phospholipids. In particular, regulates phosphatidylinositol-4,5-bisphosphate levels, modulating inflammatory cytokine production in T-cells. Also desaturates (11E)-octadecenoate (trans-vaccenoate)(18:1n-9), a metabolite in the biohydrogenation pathway of LA (18:2n-6). Functionally, does not exhibit any catalytic activity toward 20:3n-6, but it may enhance FADS2 activity. This chain is Acyl-CoA (8-3)-desaturase, found in Homo sapiens (Human).